Here is a 260-residue protein sequence, read N- to C-terminus: Lipid II isoglutaminyl synthase (glutamine-hydrolyzing) subunit GatD (260 aa).

The GATase cobBQ-type domain occupies 16-214 (QLNIAHLYGN…FHGPILSRNA (199 aa)). C107 (nucleophile) is an active-site residue. R142 lines the substrate pocket. Residue H206 is part of the active site.

It belongs to the CobB/CobQ family. GatD subfamily. In terms of assembly, forms a heterodimer with MurT.

The catalysed reaction is beta-D-GlcNAc-(1-&gt;4)-Mur2Ac(oyl-L-Ala-gamma-D-Glu-L-Lys-D-Ala-D-Ala)-di-trans,octa-cis-undecaprenyl diphosphate + L-glutamine + ATP + H2O = beta-D-GlcNAc-(1-&gt;4)-Mur2Ac(oyl-L-Ala-D-isoglutaminyl-L-Lys-D-Ala-D-Ala)-di-trans,octa-cis-undecaprenyl diphosphate + L-glutamate + ADP + phosphate + H(+). It catalyses the reaction L-glutamine + H2O = L-glutamate + NH4(+). Its pathway is cell wall biogenesis; peptidoglycan biosynthesis. Its function is as follows. The lipid II isoglutaminyl synthase complex catalyzes the formation of alpha-D-isoglutamine in the cell wall lipid II stem peptide. The GatD subunit catalyzes the hydrolysis of glutamine to glutamate and ammonia. The resulting ammonia molecule is channeled to the active site of MurT. This chain is Lipid II isoglutaminyl synthase (glutamine-hydrolyzing) subunit GatD, found in Streptococcus pneumoniae (strain ATCC BAA-255 / R6).